Reading from the N-terminus, the 96-residue chain is Protein RnfH (96 aa).

Belongs to the UPF0125 (RnfH) family.

The chain is Protein RnfH from Psychromonas ingrahamii (strain DSM 17664 / CCUG 51855 / 37).